A 473-amino-acid polypeptide reads, in one-letter code: Photosystem II CP43 reaction center protein (473 aa).

Positions Met-1 to Glu-14 are excised as a propeptide. Thr-15 bears the N-acetylthreonine mark. At Thr-15 the chain carries Phosphothreonine. 5 helical membrane passes run Leu-69–Ala-93, Leu-134–Asn-155, Lys-178–Thr-200, Lys-255–Ser-275, and Trp-291–Ala-312. Glu-367 contacts [CaMn4O5] cluster. A helical transmembrane segment spans residues Arg-447–Pro-471.

The protein belongs to the PsbB/PsbC family. PsbC subfamily. As to quaternary structure, PSII is composed of 1 copy each of membrane proteins PsbA, PsbB, PsbC, PsbD, PsbE, PsbF, PsbH, PsbI, PsbJ, PsbK, PsbL, PsbM, PsbT, PsbX, PsbY, PsbZ, Psb30/Ycf12, at least 3 peripheral proteins of the oxygen-evolving complex and a large number of cofactors. It forms dimeric complexes. Binds multiple chlorophylls and provides some of the ligands for the Ca-4Mn-5O cluster of the oxygen-evolving complex. It may also provide a ligand for a Cl- that is required for oxygen evolution. PSII binds additional chlorophylls, carotenoids and specific lipids. is required as a cofactor.

The protein localises to the plastid. It is found in the chloroplast thylakoid membrane. Its function is as follows. One of the components of the core complex of photosystem II (PSII). It binds chlorophyll and helps catalyze the primary light-induced photochemical processes of PSII. PSII is a light-driven water:plastoquinone oxidoreductase, using light energy to abstract electrons from H(2)O, generating O(2) and a proton gradient subsequently used for ATP formation. This Lemna minor (Common duckweed) protein is Photosystem II CP43 reaction center protein.